A 146-amino-acid chain; its full sequence is Hemoglobin subunit beta (146 aa).

Position 1 is an N-acetylvaline (Val1). One can recognise a Globin domain in the interval 2–146 (HLTADEKSAV…VATALGHKYH (145 aa)). Position 12 is a phosphothreonine (Thr12). Position 44 is a phosphoserine (Ser44). Lys59 carries the post-translational modification N6-acetyllysine. His63 provides a ligand contact to heme b. Lys82 is modified (N6-acetyllysine). His92 lines the heme b pocket. Cys93 is modified (S-nitrosocysteine). N6-acetyllysine is present on Lys144.

It belongs to the globin family. Heterotetramer of two alpha chains and two beta chains. Red blood cells.

In terms of biological role, involved in oxygen transport from the lung to the various peripheral tissues. In Antrozous pallidus (Pallid bat), this protein is Hemoglobin subunit beta (HBB).